A 426-amino-acid chain; its full sequence is Serine--tRNA ligase (426 aa).

230 to 232 (TSE) contributes to the L-serine binding site. Position 261 to 263 (261 to 263 (RSE)) interacts with ATP. Residue glutamate 284 coordinates L-serine. Residue 348–351 (EISS) participates in ATP binding. Serine 384 is an L-serine binding site.

This sequence belongs to the class-II aminoacyl-tRNA synthetase family. Type-1 seryl-tRNA synthetase subfamily. Homodimer. The tRNA molecule binds across the dimer.

The protein localises to the cytoplasm. The enzyme catalyses tRNA(Ser) + L-serine + ATP = L-seryl-tRNA(Ser) + AMP + diphosphate + H(+). It catalyses the reaction tRNA(Sec) + L-serine + ATP = L-seryl-tRNA(Sec) + AMP + diphosphate + H(+). The protein operates within aminoacyl-tRNA biosynthesis; selenocysteinyl-tRNA(Sec) biosynthesis; L-seryl-tRNA(Sec) from L-serine and tRNA(Sec): step 1/1. Catalyzes the attachment of serine to tRNA(Ser). Is also able to aminoacylate tRNA(Sec) with serine, to form the misacylated tRNA L-seryl-tRNA(Sec), which will be further converted into selenocysteinyl-tRNA(Sec). This chain is Serine--tRNA ligase, found in Sphingopyxis alaskensis (strain DSM 13593 / LMG 18877 / RB2256) (Sphingomonas alaskensis).